Consider the following 165-residue polypeptide: Ribosome maturation factor RimM (165 aa).

The region spanning 94–165 is the PRC barrel domain; the sequence is EDEFYIADLT…YVILNYQREA (72 aa).

It belongs to the RimM family. Binds ribosomal protein uS19.

It is found in the cytoplasm. Its function is as follows. An accessory protein needed during the final step in the assembly of 30S ribosomal subunit, possibly for assembly of the head region. Essential for efficient processing of 16S rRNA. May be needed both before and after RbfA during the maturation of 16S rRNA. It has affinity for free ribosomal 30S subunits but not for 70S ribosomes. The chain is Ribosome maturation factor RimM from Rickettsia rickettsii (strain Sheila Smith).